We begin with the raw amino-acid sequence, 342 residues long: Large ribosomal subunit protein uL3 (342 aa).

The disordered stretch occupies residues 1-22 (MGHRKLSSPRRGSAGLRPRKRA).

It belongs to the universal ribosomal protein uL3 family. Part of the 50S ribosomal subunit. Forms a cluster with proteins L14 and L24e.

In terms of biological role, one of the primary rRNA binding proteins, it binds directly near the 3'-end of the 23S rRNA, where it nucleates assembly of the 50S subunit. The sequence is that of Large ribosomal subunit protein uL3 from Sulfolobus acidocaldarius (strain ATCC 33909 / DSM 639 / JCM 8929 / NBRC 15157 / NCIMB 11770).